Reading from the N-terminus, the 391-residue chain is Carbamoyl phosphate synthase small chain (391 aa).

Residues 1-199 (MVRISGFCCA…TWEFIEGPTT (199 aa)) form a CPSase region. L-glutamine contacts are provided by Ser-61, Gly-251, and Gly-253. The 186-residue stretch at 203-388 (TVVAIDFGVK…VALMRDRQPT (186 aa)) folds into the Glutamine amidotransferase type-1 domain. Cys-279 serves as the catalytic Nucleophile. The L-glutamine site is built by Leu-280, Gln-283, Asn-319, Gly-321, and Phe-322. Active-site residues include His-361 and Glu-363.

Belongs to the CarA family. In terms of assembly, composed of two chains; the small (or glutamine) chain promotes the hydrolysis of glutamine to ammonia, which is used by the large (or ammonia) chain to synthesize carbamoyl phosphate. Tetramer of heterodimers (alpha,beta)4.

The catalysed reaction is hydrogencarbonate + L-glutamine + 2 ATP + H2O = carbamoyl phosphate + L-glutamate + 2 ADP + phosphate + 2 H(+). It carries out the reaction L-glutamine + H2O = L-glutamate + NH4(+). It functions in the pathway amino-acid biosynthesis; L-arginine biosynthesis; carbamoyl phosphate from bicarbonate: step 1/1. The protein operates within pyrimidine metabolism; UMP biosynthesis via de novo pathway; (S)-dihydroorotate from bicarbonate: step 1/3. Small subunit of the glutamine-dependent carbamoyl phosphate synthetase (CPSase). CPSase catalyzes the formation of carbamoyl phosphate from the ammonia moiety of glutamine, carbonate, and phosphate donated by ATP, constituting the first step of 2 biosynthetic pathways, one leading to arginine and/or urea and the other to pyrimidine nucleotides. The small subunit (glutamine amidotransferase) binds and cleaves glutamine to supply the large subunit with the substrate ammonia. The sequence is that of Carbamoyl phosphate synthase small chain from Synechococcus sp. (strain ATCC 27144 / PCC 6301 / SAUG 1402/1) (Anacystis nidulans).